A 593-amino-acid polypeptide reads, in one-letter code: Aspartate--tRNA(Asp/Asn) ligase (593 aa).

An L-aspartate-binding site is contributed by Glu-173. The tract at residues 197-200 (QLFK) is aspartate. Arg-219 contacts L-aspartate. ATP contacts are provided by residues 219-221 (RDE) and Gln-228. Position 451 (His-451) interacts with L-aspartate. Residue Glu-485 participates in ATP binding. Arg-492 is an L-aspartate binding site. 537 to 540 (GIDR) lines the ATP pocket.

The protein belongs to the class-II aminoacyl-tRNA synthetase family. Type 1 subfamily. As to quaternary structure, homodimer.

The protein localises to the cytoplasm. It catalyses the reaction tRNA(Asx) + L-aspartate + ATP = L-aspartyl-tRNA(Asx) + AMP + diphosphate. Functionally, aspartyl-tRNA synthetase with relaxed tRNA specificity since it is able to aspartylate not only its cognate tRNA(Asp) but also tRNA(Asn). Reaction proceeds in two steps: L-aspartate is first activated by ATP to form Asp-AMP and then transferred to the acceptor end of tRNA(Asp/Asn). In Legionella pneumophila subsp. pneumophila (strain Philadelphia 1 / ATCC 33152 / DSM 7513), this protein is Aspartate--tRNA(Asp/Asn) ligase.